The following is a 249-amino-acid chain: Elongator complex protein 6 homolog (249 aa).

The protein belongs to the ELP6 family. Component of the elongator complex.

The protein localises to the cytoplasm. It localises to the nucleus. It participates in tRNA modification; 5-methoxycarbonylmethyl-2-thiouridine-tRNA biosynthesis. Functionally, component of the elongator complex which is required for multiple tRNA modifications, including mcm5U (5-methoxycarbonylmethyl uridine), mcm5s2U (5-methoxycarbonylmethyl-2-thiouridine), and ncm5U (5-carbamoylmethyl uridine). The elongator complex catalyzes formation of carboxymethyluridine in the wobble base at position 34 in tRNAs. This is Elongator complex protein 6 homolog from Schizosaccharomyces pombe (strain 972 / ATCC 24843) (Fission yeast).